A 244-amino-acid polypeptide reads, in one-letter code: Sepiapterin reductase (244 aa).

Residues 9–15, 40–42, 66–67, and N93 contribute to the NADP(+) site; these read GAGKGIG, SRT, and DI. Position 99 (F99) interacts with substrate. NADP(+) is bound at residue T116. 2 residues coordinate substrate: S145 and Y158. NADP(+)-binding positions include Y158, K162, and 191–196; that span reads VYTPMW. Position 196 (W196) interacts with substrate.

It belongs to the short-chain dehydrogenases/reductases (SDR) family. Homodimer.

The protein localises to the cytoplasm. The enzyme catalyses L-threo-7,8-dihydrobiopterin + NADP(+) = L-sepiapterin + NADPH + H(+). It catalyses the reaction L-threo-tetrahydrobiopterin + 2 NADP(+) = 6-pyruvoyl-5,6,7,8-tetrahydropterin + 2 NADPH + 2 H(+). Slightly inhibited by N-acetyldopamine but not by N-acetylserotonin or melatonin. Catalyzes the final reductions in tetra-hydrobiopterin biosynthesis to form 5,6,7,8-tetrahydrobiopterin. The polypeptide is Sepiapterin reductase (Chlorobaculum tepidum (strain ATCC 49652 / DSM 12025 / NBRC 103806 / TLS) (Chlorobium tepidum)).